The following is a 311-amino-acid chain: Phospholipid phosphatase 3 (311 aa).

Residues 1 to 33 (MQNYKYDKAIVPESKNGGSPALNNNPRRSGSKR) lie on the Cytoplasmic side of the membrane. Residue serine 19 is modified to Phosphoserine. A helical transmembrane segment spans residues 34 to 54 (VLLICLDLFCLFMAGLPFLII). The Extracellular segment spans residues 55-85 (ETSTIKPYHRGFYCNDESIKYPLKTGETIND). Residues 86–106 (AVLCAVGIVIAILAIITGEFY) form a helical membrane-spanning segment. Residues 107 to 122 (RIYYLKKSRSTIQNPY) lie on the Cytoplasmic side of the membrane. Residues 109–110 (YY) carry the Dityrosine basolateral targeting motif motif. A helical membrane pass occupies residues 123-143 (VAALYKQVGCFLFGCAISQSF). Over 144 to 193 (TDIAKVSIGRLRPHFLSVCNPDFSQINCSEGYIQNYRCRGDDSKVQEARK) the chain is Extracellular. Residues 148 to 156 (KVSIGRLRP) form a phosphatase sequence motif I region. N-linked (GlcNAc...) asparagine glycosylation occurs at asparagine 170. Residues 182-184 (RGD) carry the Integrin-binding motif motif. Residues 194–214 (SFFSGHASFSMYTMLYLVLYL) traverse the membrane as a helical segment. A phosphatase sequence motif II region spans residues 196–199 (FSGH). Residue histidine 199 is the Proton donors of the active site. At 215–225 (QARFTWRGARL) the chain is on the cytoplasmic side. A helical membrane pass occupies residues 226-243 (LRPLLQFTLIMMAFYTGL). Residues 244 to 255 (SRVSDHKHHPSD) are phosphatase sequence motif III. The Extracellular portion of the chain corresponds to 244-257 (SRVSDHKHHPSDVL). Histidine 251 acts as the Nucleophile in catalysis. A helical transmembrane segment spans residues 258–278 (AGFAQGALVACCIVFFVSDLF). Residues 275–311 (SDLFKTKTTLSLPAPAIRKEILSPVDIIDRNNHHNMM) are mediates interaction with CTNND1. The Cytoplasmic segment spans residues 279–311 (KTKTTLSLPAPAIRKEILSPVDIIDRNNHHNMM).

Belongs to the PA-phosphatase related phosphoesterase family. Forms functional homodimers and homooligomers that are not required for substrate recognition and catalytic activity. Can also form heterooligomers with other PLPP2 and PLPP3. Interacts with CTNND1; negatively regulates the PLPP3-mediated stabilization of beta-catenin/CTNNB1. Post-translationally, N-glycosylated. Contains high-mannose oligosaccharides. In terms of tissue distribution, ubiquitously expressed. Highly expressed in heart and placenta.

It is found in the cell membrane. Its subcellular location is the basolateral cell membrane. It localises to the endoplasmic reticulum membrane. The protein resides in the endoplasmic reticulum-Golgi intermediate compartment membrane. The protein localises to the golgi apparatus membrane. It is found in the golgi apparatus. Its subcellular location is the trans-Golgi network membrane. It localises to the membrane raft. It catalyses the reaction a 1,2-diacyl-sn-glycero-3-phosphate + H2O = a 1,2-diacyl-sn-glycerol + phosphate. The enzyme catalyses 1,2-dihexadecanoyl-sn-glycero-3-phosphate + H2O = 1,2-dihexadecanoyl-sn-glycerol + phosphate. The catalysed reaction is 1,2-di-(9Z-octadecenoyl)-sn-glycero-3-phosphate + H2O = 1,2-di-(9Z-octadecenoyl)-sn-glycerol + phosphate. It carries out the reaction a monoacyl-sn-glycero-3-phosphate + H2O = a monoacylglycerol + phosphate. It catalyses the reaction (9Z)-octadecenoyl-sn-glycero-3-phosphate + H2O = (9Z-octadecenoyl)-glycerol + phosphate. The enzyme catalyses sphing-4-enine 1-phosphate + H2O = sphing-4-enine + phosphate. The catalysed reaction is an N-acylsphing-4-enine 1-phosphate + H2O = an N-acylsphing-4-enine + phosphate. It carries out the reaction N-(octanoyl)-sphing-4-enine-1-phosphate + H2O = N-octanoylsphing-4-enine + phosphate. It catalyses the reaction N-(9Z-octadecenoyl)-ethanolamine phosphate + H2O = N-(9Z-octadecenoyl) ethanolamine + phosphate. Its pathway is lipid metabolism; phospholipid metabolism. Magnesium-independent phospholipid phosphatase. Insensitive to N-ethylmaleimide. Inhibited by sphingosine, zinc ions and modestly by propanolol. Magnesium-independent phospholipid phosphatase of the plasma membrane that catalyzes the dephosphorylation of a variety of glycerolipid and sphingolipid phosphate esters including phosphatidate/PA, lysophosphatidate/LPA, diacylglycerol pyrophosphate/DGPP, sphingosine 1-phosphate/S1P and ceramide 1-phosphate/C1P. Also acts on N-oleoyl ethanolamine phosphate/N-(9Z-octadecenoyl)-ethanolamine phosphate, a potential physiological compound. Has both an extracellular and an intracellular phosphatase activity, allowing the hydrolysis and the cellular uptake of these bioactive lipid mediators from the milieu, regulating signal transduction in different cellular processes. Through the dephosphorylation of extracellular sphingosine-1-phosphate and the regulation of its extra- and intracellular availability, plays a role in vascular homeostasis, regulating endothelial cell migration, adhesion, survival, proliferation and the production of pro-inflammatory cytokines. By maintaining the appropriate levels of this lipid in the cerebellum, also ensure its proper development and function. Through its intracellular lipid phosphatase activity may act in early compartments of the secretory pathway, regulating the formation of Golgi to endoplasmic reticulum retrograde transport carriers. In terms of biological role, independently of this phosphatase activity may also function in the Wnt signaling pathway and the stabilization of beta-catenin/CTNNB1, thereby regulating cell proliferation, migration and differentiation in angiogenesis or yet in tumor growth. Also plays a role in integrin-mediated cell-cell adhesion in angiogenesis. The protein is Phospholipid phosphatase 3 of Homo sapiens (Human).